Here is a 556-residue protein sequence, read N- to C-terminus: Arginine--tRNA ligase 2 (556 aa).

A 'HIGH' region motif is present at residues 132-142 (ANPTGDLHLGH).

The protein belongs to the class-I aminoacyl-tRNA synthetase family. In terms of assembly, monomer.

The protein resides in the cytoplasm. It catalyses the reaction tRNA(Arg) + L-arginine + ATP = L-arginyl-tRNA(Arg) + AMP + diphosphate. This Bacillus thuringiensis subsp. konkukian (strain 97-27) protein is Arginine--tRNA ligase 2.